The sequence spans 390 residues: MNGTRNWCTLVDVHPESQTAGSVDILRLTLQSELTGDELEHIAQKAGRKTYAMMPGHSSGHSLASELVESHDGHEEIIKVYLKGRSGDKMTHEKNIDQLKSEVQYIQEARNCLQKLREDISSKLDRSPGDPLRQQEIQVVLEKPNGFSQSPMTLYSSPPEVDPSMSEDVESLKKTVQELLVKLREAERRHQSDRVAFEVTLSRYQREAEQSNVALQREEDRVEQKAAEIEELQRRLLGMEAEHQALLVKVREGEMALEELRIKNADCQTEREKSAALEKEVAGFREKIHHLDDMLKSQQRKVRQMIEQLQNSKAVIQSKDATIQELKEKIAYLEAENLEMHDRMEHLIEKQVSHGNFSTQARAKTENLGSVRISKPPSPKPMPLIRVVET.

2 coiled-coil regions span residues 88 to 126 and 163 to 352; these read DKMT…KLDR and PSMS…EKQV. A disordered region spans residues 356 to 383; the sequence is NFSTQARAKTENLGSVRISKPPSPKPMP.

This sequence belongs to the tuftelin family. As to quaternary structure, interacts with TFIP11. May form oligomers. As to expression, ameloblasts, and also non-odontogenic tissues including kidney, lung, liver and testis.

Its subcellular location is the secreted. In terms of biological role, involved in the structural organization of the epidermis. Involved in the mineralization and structural organization of enamel. The chain is Tuftelin (Tuft1) from Mus musculus (Mouse).